The sequence spans 245 residues: Biosynthetic peptidoglycan transglycosylase (245 aa).

The chain crosses the membrane as a helical span at residues 20 to 42 (VYAGSVFAGAWLATQLFYLAQIA).

This sequence belongs to the glycosyltransferase 51 family.

It localises to the cell inner membrane. The enzyme catalyses [GlcNAc-(1-&gt;4)-Mur2Ac(oyl-L-Ala-gamma-D-Glu-L-Lys-D-Ala-D-Ala)](n)-di-trans,octa-cis-undecaprenyl diphosphate + beta-D-GlcNAc-(1-&gt;4)-Mur2Ac(oyl-L-Ala-gamma-D-Glu-L-Lys-D-Ala-D-Ala)-di-trans,octa-cis-undecaprenyl diphosphate = [GlcNAc-(1-&gt;4)-Mur2Ac(oyl-L-Ala-gamma-D-Glu-L-Lys-D-Ala-D-Ala)](n+1)-di-trans,octa-cis-undecaprenyl diphosphate + di-trans,octa-cis-undecaprenyl diphosphate + H(+). It functions in the pathway cell wall biogenesis; peptidoglycan biosynthesis. Peptidoglycan polymerase that catalyzes glycan chain elongation from lipid-linked precursors. This chain is Biosynthetic peptidoglycan transglycosylase, found in Burkholderia cenocepacia (strain HI2424).